A 360-amino-acid chain; its full sequence is Photosystem II protein D1 (360 aa).

3 consecutive transmembrane segments (helical) span residues Tyr30–Thr47, His119–Leu134, and Trp143–Ala157. Residue His119 coordinates chlorophyll a. Tyr127 is a binding site for pheophytin a. Residues Asp171 and Glu190 each contribute to the [CaMn4O5] cluster site. The chain crosses the membrane as a helical span at residues Phe198–Leu219. Position 199 (His199) interacts with chlorophyll a. Residues His216 and Ser265–Phe266 contribute to the a quinone site. Position 216 (His216) interacts with Fe cation. His273 lines the Fe cation pocket. A helical membrane pass occupies residues Phe275–Met289. Residues His333, Glu334, Asp343, and Ala345 each coordinate [CaMn4O5] cluster. Positions Ala346 to Gly360 are excised as a propeptide.

Belongs to the reaction center PufL/M/PsbA/D family. In terms of assembly, PSII is composed of 1 copy each of membrane proteins PsbA, PsbB, PsbC, PsbD, PsbE, PsbF, PsbH, PsbI, PsbJ, PsbK, PsbL, PsbM, PsbT, PsbX, PsbY, Psb30/Ycf12, peripheral proteins PsbO, CyanoQ (PsbQ), PsbU, PsbV and a large number of cofactors. It forms dimeric complexes. It depends on The D1/D2 heterodimer binds P680, chlorophylls that are the primary electron donor of PSII, and subsequent electron acceptors. It shares a non-heme iron and each subunit binds pheophytin, quinone, additional chlorophylls, carotenoids and lipids. D1 provides most of the ligands for the Mn4-Ca-O5 cluster of the oxygen-evolving complex (OEC). There is also a Cl(-1) ion associated with D1 and D2, which is required for oxygen evolution. The PSII complex binds additional chlorophylls, carotenoids and specific lipids. as a cofactor. Tyr-162 forms a radical intermediate that is referred to as redox-active TyrZ, YZ or Y-Z. In terms of processing, C-terminally processed by CtpA; processing is essential to allow assembly of the oxygen-evolving complex and thus photosynthetic growth.

The protein localises to the cellular thylakoid membrane. The enzyme catalyses 2 a plastoquinone + 4 hnu + 2 H2O = 2 a plastoquinol + O2. Functionally, photosystem II (PSII) is a light-driven water:plastoquinone oxidoreductase that uses light energy to abstract electrons from H(2)O, generating O(2) and a proton gradient subsequently used for ATP formation. It consists of a core antenna complex that captures photons, and an electron transfer chain that converts photonic excitation into a charge separation. The D1/D2 (PsbA/PsbD) reaction center heterodimer binds P680, the primary electron donor of PSII as well as several subsequent electron acceptors. The chain is Photosystem II protein D1 from Prochlorococcus marinus (strain NATL1A).